Here is a 349-residue protein sequence, read N- to C-terminus: ATPase GET3 (349 aa).

26–33 serves as a coordination point for ATP; it reads KGGVGKTT. Asp-57 is an active-site residue. 2 residues coordinate ATP: Glu-240 and Asn-267. Residues Cys-280 and Cys-283 each coordinate Zn(2+).

It belongs to the arsA ATPase family. As to quaternary structure, homodimer. Component of the Golgi to ER traffic (GET) complex, which is composed of GET1, GET2 and GET3. Within the complex, GET1 and GET2 form a heterotetramer which is stabilized by phosphatidylinositol binding and which binds to the GET3 homodimer. Interacts with the chloride channel protein GEF1.

Its subcellular location is the cytoplasm. The protein localises to the endoplasmic reticulum. The protein resides in the golgi apparatus. ATPase required for the post-translational delivery of tail-anchored (TA) proteins to the endoplasmic reticulum. Recognizes and selectively binds the transmembrane domain of TA proteins in the cytosol. This complex then targets to the endoplasmic reticulum by membrane-bound receptors GET1 and GET2, where the tail-anchored protein is released for insertion. This process is regulated by ATP binding and hydrolysis. ATP binding drives the homodimer towards the closed dimer state, facilitating recognition of newly synthesized TA membrane proteins. ATP hydrolysis is required for insertion. Subsequently, the homodimer reverts towards the open dimer state, lowering its affinity for the GET1-GET2 receptor, and returning it to the cytosol to initiate a new round of targeting. Cooperates with the HDEL receptor ERD2 to mediate the ATP-dependent retrieval of resident ER proteins that contain a C-terminal H-D-E-L retention signal from the Golgi to the ER. Involved in low-level resistance to the oxyanions arsenite and arsenate, and in heat tolerance. The sequence is that of ATPase GET3 from Lachancea thermotolerans (strain ATCC 56472 / CBS 6340 / NRRL Y-8284) (Yeast).